A 284-amino-acid polypeptide reads, in one-letter code: Bifunctional protein FolD (284 aa).

Residues 166-168 (GAS) and isoleucine 232 contribute to the NADP(+) site.

The protein belongs to the tetrahydrofolate dehydrogenase/cyclohydrolase family. In terms of assembly, homodimer.

The enzyme catalyses (6R)-5,10-methylene-5,6,7,8-tetrahydrofolate + NADP(+) = (6R)-5,10-methenyltetrahydrofolate + NADPH. It catalyses the reaction (6R)-5,10-methenyltetrahydrofolate + H2O = (6R)-10-formyltetrahydrofolate + H(+). Its pathway is one-carbon metabolism; tetrahydrofolate interconversion. Catalyzes the oxidation of 5,10-methylenetetrahydrofolate to 5,10-methenyltetrahydrofolate and then the hydrolysis of 5,10-methenyltetrahydrofolate to 10-formyltetrahydrofolate. This is Bifunctional protein FolD from Pseudomonas entomophila (strain L48).